The sequence spans 247 residues: NifU-like scaffold protein (247 aa).

The protein belongs to the NifU family. As to quaternary structure, homodimer.

The protein localises to the plastid. It localises to the apicoplast. It functions in the pathway cofactor biosynthesis; iron-sulfur cluster biosynthesis. Binds and transfers [4Fe-4S] iron-sulfur clusters to target proteins. The protein is NifU-like scaffold protein of Plasmodium falciparum (isolate 3D7).